The chain runs to 427 residues: Acyltransferase fer5 (427 aa).

The interval 1-24 is disordered; it reads MTAATSVQPSPAPRQPGLRATFNP. H342 contacts substrate. E380 functions as the Proton acceptor in the catalytic mechanism.

It belongs to the lysine N-acyltransferase mbtK family.

Its pathway is siderophore biosynthesis. Acyltransferase; part of the gene cluster that mediates the biosynthesis of siderophore ferrichrome A which is contributing to organismal virulence. The first step of ferrichrome A biosynthesis is performed by the HMG-CoA synthase hcs1 which catalyzes the generation of HMG-CoA and CoA using acetoacetyl-CoA and acetyl-CoA as substrates. The enoyl-CoA isomerase/hydratase fer4 then catalyzes the conversion of hcs1-produced HMG-CoA to methylglutaconyl-CoA. The acyltransferase fer5 then fuses the fer4-generated methylglutaconyl-CoA with sid1-generated hydroxyornithine to yield methylglutaconyl hydroxyornithine. Methylglutaconyl hydroxyornithine is then available for use by the NRPS fer3 to generate ferrichrome A. This chain is Acyltransferase fer5, found in Mycosarcoma maydis (Corn smut fungus).